The chain runs to 303 residues: Growth/differentiation factor 15 (303 aa).

An N-terminal signal peptide occupies residues 1 to 30; it reads MAPPALQAQPPGGSQLRFLLFLLLLLLLLS. Residues 31-188 constitute a propeptide that is removed on maturation; it reads WPSQGDALAM…LRVAAGRGRR (158 aa). The N-linked (GlcNAc...) asparagine glycan is linked to Asn-71. 4 disulfides stabilise this stretch: Cys-198/Cys-205, Cys-206/Cys-269, Cys-235/Cys-300, and Cys-239/Cys-302.

It belongs to the TGF-beta family. In terms of assembly, homodimer; disulfide-linked. Interacts with GFRAL and RET; ligand of GFRAL, which mediates GDF15 internalization and cellular signaling through interaction with RET via the formation of a 2:2:2 ternary complex composed of GDF15, GFRAL and RET. In terms of tissue distribution, detected in plasma (at protein level). Highly expressed in liver. Expressed in the distal small intestine, colon and kidney. Expressed in skeletal muscle in response to mitochondrial stress. Expressed by cardiomyocytes, expression is highly increased in heart diseases. Also detected in subcutaneous fat.

It localises to the secreted. Hormone produced in response to various stresses to confer information about those stresses to the brain, and trigger an aversive response, characterized by nausea and/or loss of appetite. The aversive response is both required to reduce continuing exposure to those stresses at the time of exposure and to promote avoidance behavior in the future. Acts by binding to its receptor, GFRAL, activating GFRAL-expressing neurons localized in the area postrema and nucleus tractus solitarius of the brainstem. It then triggers the activation of neurons localized within the parabrachial nucleus and central amygdala, which constitutes part of the 'emergency circuit' that shapes responses to stressful conditions. The GDF15-GFRAL signal induces expression of genes involved in metabolism, such as lipid metabolism in adipose tissues. Required for avoidance behavior in response to food allergens: induced downstream of mast cell activation to promote aversion and minimize harmful effects of exposure to noxious substances. In addition to suppress appetite, also promotes weight loss by enhancing energy expenditure in muscle: acts by increasing calcium futile cycling in muscle. Contributes to the effect of metformin, an anti-diabetic drug, on appetite reduction and weight loss: produced in the kidney in response to metformin treatment, thereby activating the GDF15-GFRAL response, leading to reduced appetite and weight. Produced in response to anticancer drugs, such as camptothecin or cisplatin, promoting nausea and contributing to malnutrition. Overproduced in many cancers, promoting anorexia in cancer (cachexia). Responsible for the risk of nausea during pregnancy: high levels of GDF15 during pregnancy, mostly originating from embryos, are associated with increased nausea. Maternal sensitivity to nausea is probably determined by pre-pregnancy exposure to GDF15, females with naturally high level of GDF15 being less susceptible to nausea than female mice with low levels of GDF15 before pregnancy. Promotes metabolic adaptation in response to systemic inflammation caused by bacterial and viral infections in order to promote tissue tolerance and prevent tissue damage. Required for tissue tolerance in response to myocardial infarction by acting as an inhibitor of leukocyte integring activation, thereby protecting against cardiac rupture. Inhibits growth hormone signaling on hepatocytes. The protein is Growth/differentiation factor 15 of Mus musculus (Mouse).